Reading from the N-terminus, the 103-residue chain is Large ribosomal subunit protein bL21 (103 aa).

The protein belongs to the bacterial ribosomal protein bL21 family. In terms of assembly, part of the 50S ribosomal subunit. Contacts protein L20.

Its function is as follows. This protein binds to 23S rRNA in the presence of protein L20. The polypeptide is Large ribosomal subunit protein bL21 (Rhodococcus erythropolis (strain PR4 / NBRC 100887)).